The chain runs to 266 residues: MLTIFAVSDSIGETAQQVAMAAASQFKDNAEVKRIPYVKSLEDVEDLMKTIEDCEACMIVSTIITVNVREYLTQKCIEKNINIINVLGPIINVASTILNKYPDYNPGAMWNTDETYYKRIEAMEFAMQYDDSKDYRGLKNADVVLVGLSRTSKTPLCMYLANKGIKAINIPLVPEVGVPEELYEIDKKKIFGLTINPLQLIEIRKRRLDKFHRISADIEYASDSRILEEFEFADKILRKIGCRTIDVTQRAIEDTALIIMEKLGVK.

147-154 lines the ADP pocket; the sequence is GLSRTSKT.

This sequence belongs to the pyruvate, phosphate/water dikinase regulatory protein family. PDRP subfamily.

The enzyme catalyses N(tele)-phospho-L-histidyl/L-threonyl-[pyruvate, phosphate dikinase] + ADP = N(tele)-phospho-L-histidyl/O-phospho-L-threonyl-[pyruvate, phosphate dikinase] + AMP + H(+). The catalysed reaction is N(tele)-phospho-L-histidyl/O-phospho-L-threonyl-[pyruvate, phosphate dikinase] + phosphate + H(+) = N(tele)-phospho-L-histidyl/L-threonyl-[pyruvate, phosphate dikinase] + diphosphate. Bifunctional serine/threonine kinase and phosphorylase involved in the regulation of the pyruvate, phosphate dikinase (PPDK) by catalyzing its phosphorylation/dephosphorylation. The protein is Putative pyruvate, phosphate dikinase regulatory protein of Clostridium perfringens (strain 13 / Type A).